Consider the following 166-residue polypeptide: MILFRHMEINIIVKPPFKKLVSAQFLKKIASETLKAQAADPSSELGIVITGQEEIKELNCKYRQLDEPTDVLSFYMLEENPENLTAPDDFPTPPDEATHLGEVIISYPQAELQAGAAGHSVNHELAFLLIHGVLHLLGYDHHETAAEAVMKSHQDIAMKHIREILE.

Positions 131, 135, and 141 each coordinate Zn(2+).

The protein belongs to the endoribonuclease YbeY family. The cofactor is Zn(2+).

It is found in the cytoplasm. Single strand-specific metallo-endoribonuclease involved in late-stage 70S ribosome quality control and in maturation of the 3' terminus of the 16S rRNA. The protein is Endoribonuclease YbeY of Dehalococcoides mccartyi (strain CBDB1).